The sequence spans 230 residues: Extracellular ribonuclease LE (230 aa).

Positions 1 to 25 are cleaved as a signal peptide; it reads MASNSAFSLFLILLIITQCLSVLNA. Residue Gln-37 coordinates RNA. Disulfide bonds link Cys-43–Cys-49, Cys-50–Cys-106, Cys-79–Cys-125, Cys-186–Cys-221, and Cys-202–Cys-213. RNA contacts are provided by residues His-64, Phe-114, 117 to 118, and 121 to 122; these read HE and KH. His-64 functions as the Proton donor in the catalytic mechanism. Glu-118 is a catalytic residue. His-122 acts as the Proton acceptor in catalysis.

This sequence belongs to the RNase T2 family.

It is found in the secreted. It localises to the extracellular space. Its subcellular location is the cell wall. It carries out the reaction a ribonucleotidyl-ribonucleotide-RNA + H2O = a 3'-end 3'-phospho-ribonucleotide-RNA + a 5'-end dephospho-ribonucleoside-RNA + H(+). In terms of biological role, probably involved in plant phosphate-starvation rescue system. The protein is Extracellular ribonuclease LE of Solanum lycopersicum (Tomato).